A 256-amino-acid chain; its full sequence is Agamous-like MADS-box protein AGL18 (256 aa).

Positions 1 to 61 constitute an MADS-box domain; the sequence is MGRGRIEIKK…GKIYDFSSVC (61 aa). Positions 94–184 constitute a K-box domain; that stretch reads NEAVLRNDDS…RKQVEMLGRG (91 aa). A disordered region spans residues 179-232; sequence EMLGRGSGPKVLNERPQDSSPEADPESSSSEEDENDNEEHHSDTSLQLGLSSTG. Acidic residues predominate over residues 199 to 215; it reads PEADPESSSSEEDENDN. Residues 222 to 232 are compositionally biased toward polar residues; it reads TSLQLGLSSTG.

As to expression, mostly expressed in pollen, roots, flowers and siliques, and to a lower extent, in stems and leaves. Expressed in the endosperm and in developing male and female gametophytes. Also present in seedlings.

Its subcellular location is the nucleus. In terms of biological role, probable transcription factor involved in the negative regulation of flowering, probably through the photoperiodic pathway. Prevents premature flowering. Downstream regulator of a subset of the MIKC* MADS-controlled genes required during pollen maturation. In Arabidopsis thaliana (Mouse-ear cress), this protein is Agamous-like MADS-box protein AGL18 (AGL18).